Reading from the N-terminus, the 122-residue chain is Fluoride-specific ion channel FluC (122 aa).

Helical transmembrane passes span 6–26, 33–53, 60–80, and 101–121; these read LVVGFGGFIGAILRMFSINLV, SISLGTLFVNVLGSFIIGLLF, GLSPLLKSFISTGFLGAFTTF, and LNIILNVFLCLFAAWLGFIIF. G75 and T78 together coordinate Na(+).

Belongs to the fluoride channel Fluc/FEX (TC 1.A.43) family.

It is found in the cell inner membrane. The catalysed reaction is fluoride(in) = fluoride(out). With respect to regulation, na(+) is not transported, but it plays an essential structural role and its presence is essential for fluoride channel function. Its function is as follows. Fluoride-specific ion channel. Important for reducing fluoride concentration in the cell, thus reducing its toxicity. The polypeptide is Fluoride-specific ion channel FluC (Campylobacter jejuni subsp. jejuni serotype O:6 (strain 81116 / NCTC 11828)).